We begin with the raw amino-acid sequence, 154 residues long: Insulin-like growth factor 1 (154 aa).

Residues 50 to 78 (GPETLCGAELVDALQFVCGDRGFYFNKPT) form a b region. Disulfide bonds link Cys-55-Cys-97, Cys-67-Cys-110, and Cys-96-Cys-101. Residues 79-90 (GYGSSSRRAPQT) are c. The tract at residues 91-111 (GIVDECCFRSCDLRRLEMYCA) is a. The tract at residues 112–119 (PLKPAKSA) is d. A propeptide spans 120 to 154 (RSVRAQRHTDMPKAQKEVHLKNTSRGSAGNKNYRM) (e peptide). Residues 121-154 (SVRAQRHTDMPKAQKEVHLKNTSRGSAGNKNYRM) are disordered. Basic and acidic residues predominate over residues 126-139 (RHTDMPKAQKEVHL). Over residues 140–154 (KNTSRGSAGNKNYRM) the composition is skewed to polar residues.

Belongs to the insulin family. As to quaternary structure, forms a ternary complex with IGFR1 and ITGAV:ITGB3. Forms a ternary complex with IGFR1 and ITGA6:ITGB4. Forms a ternary complex with IGFBP3 and ALS.

The protein localises to the secreted. The insulin-like growth factors, isolated from plasma, are structurally and functionally related to insulin but have a much higher growth-promoting activity. May be a physiological regulator of [1-14C]-2-deoxy-D-glucose (2DG) transport and glycogen synthesis in osteoblasts. Stimulates glucose transport in bone-derived osteoblastic (PyMS) cells and is effective at much lower concentrations than insulin, not only regarding glycogen and DNA synthesis but also with regard to enhancing glucose uptake. May play a role in synapse maturation. Ca(2+)-dependent exocytosis of IGF1 is required for sensory perception of smell in the olfactory bulb. Acts as a ligand for IGF1R. Binds to the alpha subunit of IGF1R, leading to the activation of the intrinsic tyrosine kinase activity which autophosphorylates tyrosine residues in the beta subunit thus initiating a cascade of down-stream signaling events leading to activation of the PI3K-AKT/PKB and the Ras-MAPK pathways. Binds to integrins ITGAV:ITGB3 and ITGA6:ITGB4. Its binding to integrins and subsequent ternary complex formation with integrins and IGFR1 are essential for IGF1 signaling. Induces the phosphorylation and activation of IGFR1, MAPK3/ERK1, MAPK1/ERK2 and AKT1. As part of the MAPK/ERK signaling pathway, acts as a negative regulator of apoptosis in cardiomyocytes via promotion of STUB1/CHIP-mediated ubiquitination and degradation of ICER-type isoforms of CREM. The sequence is that of Insulin-like growth factor 1 from Bos taurus (Bovine).